We begin with the raw amino-acid sequence, 204 residues long: Large ribosomal subunit protein uL4 (204 aa).

The interval 49–76 (KTKGISDVSGTTAKPYGQKRTGRARQGS) is disordered.

This sequence belongs to the universal ribosomal protein uL4 family. As to quaternary structure, part of the 50S ribosomal subunit.

Its function is as follows. One of the primary rRNA binding proteins, this protein initially binds near the 5'-end of the 23S rRNA. It is important during the early stages of 50S assembly. It makes multiple contacts with different domains of the 23S rRNA in the assembled 50S subunit and ribosome. Forms part of the polypeptide exit tunnel. The protein is Large ribosomal subunit protein uL4 of Wolbachia pipientis wMel.